Here is a 717-residue protein sequence, read N- to C-terminus: Translation initiation factor eIF2B subunit epsilon (717 aa).

Residues 1 to 14 (MAATAAVPGAAAGR) show a composition bias toward low complexity. The disordered stretch occupies residues 1 to 37 (MAATAAVPGAAAGRASKRGGGGSGGGGTQGAEEEPPP). Arg18 carries the post-translational modification Omega-N-methylarginine. A compositionally biased stretch (gly residues) spans 18 to 29 (RGGGGSGGGGTQ). A Phosphoserine modification is found at Ser23. Glycyl lysine isopeptide (Lys-Gly) (interchain with G-Cter in ubiquitin) cross-links involve residues Lys57 and Lys99. Ser126 is modified (phosphoserine). Glycyl lysine isopeptide (Lys-Gly) (interchain with G-Cter in ubiquitin) cross-links involve residues Lys137 and Lys213. Position 318 is a phosphothreonine (Thr318). Residues 442 to 479 (GSVISLHPPDAEEDEDDGQFSDDSGADQEKEKVKLKGY) form a disordered region. Ser446, Ser462, and Ser465 each carry phosphoserine. The segment covering 452 to 467 (AEEDEDDGQFSDDSGA) has biased composition (acidic residues). Lys501 is covalently cross-linked (Glycyl lysine isopeptide (Lys-Gly) (interchain with G-Cter in ubiquitin)). The disordered stretch occupies residues 517–538 (TEEESETESEGSVDPEELDSRA). Residues 519-533 (EESETESEGSVDPEE) show a composition bias toward acidic residues. A phosphoserine mark is found at Ser528 and Ser536. In terms of domain architecture, W2 spans 539–716 (GSPQLDDIRV…REAEEESSED (178 aa)). Phosphoserine; by DYRK2 is present on Ser540. Ser713 is modified (phosphoserine).

It belongs to the eIF-2B gamma/epsilon subunits family. In terms of assembly, component of the translation initiation factor 2B (eIF2B) complex which is a heterodecamer of two sets of five different subunits: alpha, beta, gamma, delta and epsilon. Subunits alpha, beta and delta comprise a regulatory subcomplex and subunits epsilon and gamma comprise a catalytic subcomplex. Within the complex, the hexameric regulatory complex resides at the center, with the two heterodimeric catalytic subcomplexes bound on opposite sides. Post-translationally, phosphorylated at Ser-540 by DYRK2; this is required for subsequent phosphorylation by GSK3B. Phosphorylated on serine and threonine residues by GSK3B; phosphorylation inhibits its function. Polyubiquitinated, probably by NEDD4.

The protein resides in the cytoplasm. It is found in the cytosol. Its activity is regulated as follows. Activated by the chemical integrated stress response (ISR) inhibitor ISRIB which stimulates guanine nucleotide exchange factor activity for both phosphorylated and unphosphorylated eIF2. Acts as a component of the translation initiation factor 2B (eIF2B) complex, which catalyzes the exchange of GDP for GTP on eukaryotic initiation factor 2 (eIF2) gamma subunit. Its guanine nucleotide exchange factor activity is repressed when bound to eIF2 complex phosphorylated on the alpha subunit, thereby limiting the amount of methionyl-initiator methionine tRNA available to the ribosome and consequently global translation is repressed. The protein is Translation initiation factor eIF2B subunit epsilon (Eif2b5) of Mus musculus (Mouse).